Reading from the N-terminus, the 1261-residue chain is Apoptotic protease-activating factor 1 (1261 aa).

Residues 1–90 (MEERARSRLL…GDLASLLHSD (90 aa)) form the CARD domain. Residues 106 to 417 (VSPSVQAILS…LELEEVEDVL (312 aa)) enclose the NB-ARC domain. 154–161 (GMAGSGKS) contacts ATP. 13 WD repeats span residues 615-654 (PHQG…KLLE), 657-696 (AHEE…LIRE), 700-743 (EHEE…SQNT), 746-785 (GHME…EWKS), 798-836 (EIKA…LLLK), 840-879 (SRLS…KKAE), 882-921 (GHLS…TSSA), 964-1003 (ELSS…ASVK), 1006-1045 (GHTK…CMVL), 1047-1088 (GHME…MLQD), 1091-1130 (CHEG…MLFL), 1133-1172 (GHKD…LLKI), and 1184-1223 (YHAG…QTFY).

As to quaternary structure, monomer. Oligomerizes upon binding of cytochrome c and dATP.

It localises to the cytoplasm. Functionally, oligomeric Apaf-1 mediates the cytochrome c-dependent autocatalytic activation of pro-caspase-9 (Apaf-3), leading to the activation of caspase-3 and apoptosis. This activation requires ATP. This Danio rerio (Zebrafish) protein is Apoptotic protease-activating factor 1 (apaf1).